The chain runs to 494 residues: Probable malate:quinone oxidoreductase 3 (494 aa).

It belongs to the MQO family. Requires FAD as cofactor.

It carries out the reaction (S)-malate + a quinone = a quinol + oxaloacetate. The protein operates within carbohydrate metabolism; tricarboxylic acid cycle; oxaloacetate from (S)-malate (quinone route): step 1/1. This Staphylococcus epidermidis (strain ATCC 35984 / DSM 28319 / BCRC 17069 / CCUG 31568 / BM 3577 / RP62A) protein is Probable malate:quinone oxidoreductase 3.